We begin with the raw amino-acid sequence, 314 residues long: Small ribosomal subunit protein RACK1 (314 aa).

Position 10 is a phosphothreonine (Thr-10). The stretch at 13–44 is one WD 1 repeat; sequence GHSGWVTSLSTAPENPDILLSGSRDKSIILWN. Ser-39 is modified (phosphoserine). Tyr-52 is modified (phosphotyrosine). 6 WD repeats span residues 61–91, 103–133, 146–178, 190–220, 231–260, and 281–311; these read GHSHFVSDCALSFDSHYALSASWDKTIRLWD, GHTSDVLSVSISPDNRQVVSGSRDKTIKIWN, GHSDWVSCVRFSPNPDNLTFVSAGWDKAVKVWD, GHTGYVSAVTISPDGSLCASGGRDGTLMLWD, EAKANINALVFSPNRYWLCAATGSSIRIFD, and SSEPECISLTWSPDGQTLFSGWTDNLIRVWQ. The residue at position 148 (Ser-148) is a Phosphoserine. Phosphoserine occurs at positions 242 and 255.

This sequence belongs to the WD repeat G protein beta family. Ribosomal protein RACK1 subfamily. Component of the small ribosomal subunit (SSU). Mature yeast ribosomes consist of a small (40S) and a large (60S) subunit. The 40S small subunit contains 1 molecule of ribosomal RNA (18S rRNA) and at least 33 different proteins. The large 60S subunit contains 3 rRNA molecules (25S, 5.8S and 5S rRNA) and at least 46 different proteins. RACK1 is located at the head of the SSU in the vicinity of the mRNA exit channel. RACK1 interacts with the mRNA-binding protein SCP16. RACK1 also exists simultaneously as a homodimer in a cytosolic non-ribosome-bound form. Interacts with pck2. Interacts with pat1/ran1.

Its subcellular location is the cytoplasm. It is found in the membrane. In terms of biological role, component of the ribosome, a large ribonucleoprotein complex responsible for the synthesis of proteins in the cell. The small ribosomal subunit (SSU) binds messenger RNAs (mRNAs) and translates the encoded message by selecting cognate aminoacyl-transfer RNA (tRNA) molecules. The large subunit (LSU) contains the ribosomal catalytic site termed the peptidyl transferase center (PTC), which catalyzes the formation of peptide bonds, thereby polymerizing the amino acids delivered by tRNAs into a polypeptide chain. The nascent polypeptides leave the ribosome through a tunnel in the LSU and interact with protein factors that function in enzymatic processing, targeting, and the membrane insertion of nascent chains at the exit of the ribosomal tunnel. Located at the head of the 40S ribosomal subunit in the vicinity of the mRNA exit channel, RACK1 serves as a scaffold protein that can recruit other proteins to the ribosome. Involved in induction of the ribosome quality control (RQC) pathway; a pathway that degrades nascent peptide chains during problematic translation. Involved in the negative regulation of translation of a specific subset of proteins. May be a receptor for protein kinase C in the regulation of actin cytoskeleton organization during cell wall synthesis and morphogenesis. Involved in the control of G2/M transition. May function as an anchoring protein for pat1/ran1 kinase. Negatively regulates the cell integrity transduction pathway by favoring translation of the tyrosine-phosphatases pyp1 and pyp2 that deactivate pmk1. Positively regulates the synthesis of the stress-responsive transcription factor Atf1 and the cytoplasmic catalase, a detoxificant enzyme induced by treatment with hydrogen peroxide. The sequence is that of Small ribosomal subunit protein RACK1 from Schizosaccharomyces pombe (strain 972 / ATCC 24843) (Fission yeast).